The primary structure comprises 73 residues: Copper chaperone ATX1 (73 aa).

Residues 4 to 68 (IKHYQFNVVM…KIKKTGKEVR (65 aa)) form the HMA domain. The Cu(+) site is built by Cys-15 and Cys-18.

Belongs to the ATX1 family. In terms of assembly, homodimer. Interacts with CCC2 via the copper anion.

Its subcellular location is the cytoplasm. Its activity is regulated as follows. Tetrathiomolybdate directly and reversibly down-regulates copper delivery to secreted metalloenzymes. Its function is as follows. Copper homeostasis factor that specifically transports copper to the secretory pathway for incorporation into copper enzymes destined for the cell surface or extracellular milieu. Shuttles copper to the transport ATPase CCC2 on a post-Golgi vesicle for eventual targeting to the cell-surface high-affinity iron uptake protein FET3. Protects against oxygen toxicity. This is Copper chaperone ATX1 from Saccharomyces cerevisiae (strain ATCC 204508 / S288c) (Baker's yeast).